We begin with the raw amino-acid sequence, 515 residues long: MDEFHRCGKEDSFWQQCFLYPLFFQEDLYAISHDHYLDVSSSSRPMEHLSSNDQLSFLTVKRLIGQIRQQNHSIVLFVNCDPNPLADRKKSFYSESVLEALTLVLEVPFSIWSKYSVEGMNESKSFRSIHSIFPFLEDKFPHSNSILDARIPYSIHPEILVRTFRRWIRDAPSLHPLRSVLYEYRNSPDNLQRSIIVVPRVNTRFFLFLWNYYVCECESILFSRLKRSSHSRSLSHGSFPQRTHFHRKIKHIIIFSRRNSLKSIWSLKDPKIHYVRYGERPIIAIKGAHLLVKKCRYYLLIFRQFYFHLWSEPYRVCSHQLSKNCSSSPGYFLRVRMNPILVRTKMLDELFIADLITDEIDPIVPIVPIIGLLATEKFCDISGRPISKLSWTSLTDDDILDRFDQIWRNLFHYYSGSFDRDGLYRIKYILSLSCAKTLACKHKSTIRVVRKELGPELFKKSFSKEREFYSLRFSSKAAARSQRERIWHSDIPQINPLANSWQKIQDLKIENLFDQ.

It belongs to the intron maturase 2 family. MatK subfamily.

The protein resides in the plastid. It is found in the chloroplast. Its function is as follows. Usually encoded in the trnK tRNA gene intron. Probably assists in splicing its own and other chloroplast group II introns. The sequence is that of Maturase K from Pinus coulteri (Coulter pine).